Here is a 436-residue protein sequence, read N- to C-terminus: MLQQRVTVIGAGLAGSEAAWQLAKRGIQVDLYEMRPVRQTPAHHTDQFAELVCSNSLRANGLQNAVGVLKEEMRTLDSLILKAADTASVPAGGALAVDRHEFAGFITEKLKNHENVTVHNEELKEIPEGIVIVATGPLTSPDLSASLKAFTGEDYLYFYDAAAPILDGDTIDRDKVYLKSRYDKGEAAYLNCPMTEEEFDVFYEELIKAEVVPLKEFEKEIYFEGCMPFEVMAERGKKTLLFGPMKPVGLEDPKTGKRPYAVVQLRQDNSAGTLYNLVGFQTHLKWGEQKRIIRLIPGLENADIVRYGVMHRNTFINSPSLLKPTYQARTRDTLFFAGQMTGVEGYVESAASGLLAGINAAKMIAGEELVVLPRETMLGSMAHYITTADGKHFQPMNANFGLVPSLEDAPKKMKKQERYERYANRALETIQQYKDL.

10–15 (GAGLAG) contributes to the FAD binding site.

Belongs to the MnmG family. TrmFO subfamily. Requires FAD as cofactor.

The protein resides in the cytoplasm. The catalysed reaction is uridine(54) in tRNA + (6R)-5,10-methylene-5,6,7,8-tetrahydrofolate + NADH + H(+) = 5-methyluridine(54) in tRNA + (6S)-5,6,7,8-tetrahydrofolate + NAD(+). The enzyme catalyses uridine(54) in tRNA + (6R)-5,10-methylene-5,6,7,8-tetrahydrofolate + NADPH + H(+) = 5-methyluridine(54) in tRNA + (6S)-5,6,7,8-tetrahydrofolate + NADP(+). Its function is as follows. Catalyzes the folate-dependent formation of 5-methyl-uridine at position 54 (M-5-U54) in all tRNAs. This is Methylenetetrahydrofolate--tRNA-(uracil-5-)-methyltransferase TrmFO from Exiguobacterium sp. (strain ATCC BAA-1283 / AT1b).